The sequence spans 202 residues: Ras-related protein Rab-1A (202 aa).

Residues 15 to 23, 33 to 40, 63 to 67, 121 to 124, and 151 to 153 contribute to the GTP site; these read GDSGVGKSC, YSESFIST, DTAGQ, NKSD, and SAK. An Effector region motif is present at residues 37–45; it reads FISTIGVDF. The tract at residues 180–202 is disordered; that stretch reads QTVDKNKVVPGSSAPISPKSGCC. Residues C201 and C202 are each lipidated (S-geranylgeranyl cysteine).

Belongs to the small GTPase superfamily. Rab family.

Its subcellular location is the cell membrane. The chain is Ras-related protein Rab-1A (rab1A) from Dictyostelium discoideum (Social amoeba).